Consider the following 476-residue polypeptide: Ribulose bisphosphate carboxylase large chain (476 aa).

Residues N124 and T174 each coordinate substrate. Residue K176 is the Proton acceptor of the active site. Substrate is bound at residue K178. K202, D204, and E205 together coordinate Mg(2+). N6-carboxylysine is present on K202. The active-site Proton acceptor is H295. The substrate site is built by R296, H328, and S380.

It belongs to the RuBisCO large chain family. Type I subfamily. In terms of assembly, heterohexadecamer of 8 large chains and 8 small chains; disulfide-linked. The disulfide link is formed within the large subunit homodimers. The cofactor is Mg(2+). The disulfide bond which can form in the large chain dimeric partners within the hexadecamer appears to be associated with oxidative stress and protein turnover.

It is found in the carboxysome. It catalyses the reaction 2 (2R)-3-phosphoglycerate + 2 H(+) = D-ribulose 1,5-bisphosphate + CO2 + H2O. The catalysed reaction is D-ribulose 1,5-bisphosphate + O2 = 2-phosphoglycolate + (2R)-3-phosphoglycerate + 2 H(+). Functionally, ruBisCO catalyzes two reactions: the carboxylation of D-ribulose 1,5-bisphosphate, the primary event in carbon dioxide fixation, as well as the oxidative fragmentation of the pentose substrate in the photorespiration process. Both reactions occur simultaneously and in competition at the same active site. This chain is Ribulose bisphosphate carboxylase large chain, found in Acaryochloris marina (strain MBIC 11017).